The primary structure comprises 202 residues: Holliday junction branch migration complex subunit RuvA (202 aa).

The interval 1 to 65 (MIAYVEGRVA…EDALELFGFS (65 aa)) is domain I. Residues 66 to 144 (TWDERQTFMV…VEDLPAGLVL (79 aa)) form a domain II region. Residues 145–155 (AGGAAPGGVFR) form a flexible linker region. The domain III stretch occupies residues 155–202 (RDALAGLGNLGYLEDEAAPVLKEVLKAEPDLDVAGALRAALKALARGR).

This sequence belongs to the RuvA family. Homotetramer. Forms an RuvA(8)-RuvB(12)-Holliday junction (HJ) complex. HJ DNA is sandwiched between 2 RuvA tetramers; dsDNA enters through RuvA and exits via RuvB. An RuvB hexamer assembles on each DNA strand where it exits the tetramer. Each RuvB hexamer is contacted by two RuvA subunits (via domain III) on 2 adjacent RuvB subunits; this complex drives branch migration. In the full resolvosome a probable DNA-RuvA(4)-RuvB(12)-RuvC(2) complex forms which resolves the HJ.

Its subcellular location is the cytoplasm. In terms of biological role, the RuvA-RuvB-RuvC complex processes Holliday junction (HJ) DNA during genetic recombination and DNA repair, while the RuvA-RuvB complex plays an important role in the rescue of blocked DNA replication forks via replication fork reversal (RFR). RuvA specifically binds to HJ cruciform DNA, conferring on it an open structure. The RuvB hexamer acts as an ATP-dependent pump, pulling dsDNA into and through the RuvAB complex. HJ branch migration allows RuvC to scan DNA until it finds its consensus sequence, where it cleaves and resolves the cruciform DNA. The sequence is that of Holliday junction branch migration complex subunit RuvA from Nitratidesulfovibrio vulgaris (strain DSM 19637 / Miyazaki F) (Desulfovibrio vulgaris).